The following is a 911-amino-acid chain: DNA mismatch repair protein MutS (911 aa).

ATP is bound at residue 660 to 667; the sequence is GPNMAGKS.

Belongs to the DNA mismatch repair MutS family.

In terms of biological role, this protein is involved in the repair of mismatches in DNA. It is possible that it carries out the mismatch recognition step. This protein has a weak ATPase activity. This is DNA mismatch repair protein MutS from Rhodopseudomonas palustris (strain HaA2).